Consider the following 151-residue polypeptide: MRKVKPARKLGRTAAHRKATLANLTTQLLVYKRIETTEAKAKETRKVVEKIITKARKGTVHAQREIFKSIRDKEAVKMLFEDIVSKIGDRNGGYTRIIKLAPRFGDAAKMAVIELVDYAEAPSKQLPGKQDRAKRVKGSKKTEVVAAAAGE.

The protein belongs to the bacterial ribosomal protein bL17 family. Part of the 50S ribosomal subunit. Contacts protein L32.

The protein is Large ribosomal subunit protein bL17 of Chlorobium limicola (strain DSM 245 / NBRC 103803 / 6330).